The sequence spans 28 residues: Ranatuerin-2BYb (28 aa).

A disulfide bridge connects residues Cys23 and Cys28.

In terms of tissue distribution, expressed by the skin glands.

It is found in the secreted. Its function is as follows. Antibacterial activity against Gram-negative bacterium E.coli. Very weak hemolysis activity. This Rana boylii (Foothill yellow-legged frog) protein is Ranatuerin-2BYb.